Here is a 382-residue protein sequence, read N- to C-terminus: Transcription termination/antitermination protein NusA (382 aa).

The S1 motif domain maps to 135–199 (EDIMTGIVQR…KGPQIMISRT (65 aa)). The KH domain maps to 301 to 367 (EKTTQVIVPD…TLALDQETAD (67 aa)). A disordered region spans residues 348 to 382 (LLEDEAASHETLALDQETADQPEATVETSKNHEEE).

The protein belongs to the NusA family. As to quaternary structure, monomer. Binds directly to the core enzyme of the DNA-dependent RNA polymerase and to nascent RNA.

It localises to the cytoplasm. In terms of biological role, participates in both transcription termination and antitermination. In Halalkalibacterium halodurans (strain ATCC BAA-125 / DSM 18197 / FERM 7344 / JCM 9153 / C-125) (Bacillus halodurans), this protein is Transcription termination/antitermination protein NusA.